Reading from the N-terminus, the 1025-residue chain is Myosin phosphatase Rho-interacting protein (1025 aa).

Residues 2 to 383 form an interaction with F-actin region; it reads SAAKENPCRK…DRRSTEPSVT (382 aa). The PH 1 domain maps to 43 to 150; it reads KPIYGGWLLL…WLEMLMVYPR (108 aa). Disordered stretches follow at residues 152-302 and 317-383; these read NKQN…RRSQ and HMET…PSVT. Over residues 179–189 the composition is skewed to low complexity; sequence SSSSSSSSSSS. A phosphoserine mark is found at Ser192, Ser217, Ser218, Ser220, Ser224, and Ser226. Low complexity predominate over residues 217–236; the sequence is SSLSPAQSPSQSQPPAASSL. Residues 239 to 263 are compositionally biased toward basic and acidic residues; that stretch reads PGLESKEEESAMSSDRMDCGRKVRV. Ser265 and Ser269 each carry phosphoserine. A compositionally biased stretch (basic and acidic residues) spans 271-281; it reads EKTKQDLKAEE. Residues 284-294 are compositionally biased toward pro residues; that stretch reads LPPPLSPPSPS. Phosphoserine is present on residues Ser289 and Ser292. At Thr295 the chain carries Phosphothreonine. Residue Ser326 is modified to Phosphoserine. Residues 332–348 are compositionally biased toward basic and acidic residues; that stretch reads RQGRSEKRAFPRKRDFT. Thr348 carries the phosphothreonine modification. Ser362 and Ser365 each carry phosphoserine. The PH 2 domain occupies 387 to 483; sequence LNFKKGWLTK…WIQTIMKHVH (97 aa). 2 disordered regions span residues 485-545 and 560-591; these read TTAP…TFDW and VGGVGPADTHEPLRPEAEPGELERERARRREE. Ser493 carries the phosphoserine modification. 2 stretches are compositionally biased toward basic and acidic residues: residues 524-545 and 567-589; these read PEQKRSRARERRREGRSKTFDW and DTHEPLRPEAEPGELERERARRR. The segment at 546 to 824 is interaction with RHOA; that stretch reads AEFRPIQQAL…SVQRELEVLS (279 aa). Ser619 carries the phosphoserine modification. Thr646 is subject to Phosphothreonine. A phosphoserine mark is found at Ser663 and Ser800. A coiled-coil region spans residues 673–977; that stretch reads HELTSLLEKE…AATEALGEKS (305 aa). Residues 824-879 are interaction with PPP1R12A; sequence SEQYSQKCLENAHLAQALEAERQALRQCQRENQELNAHNQELNNRLAAEITRLRTL. A phosphoserine mark is found at Ser891, Ser977, Ser993, Ser1014, and Ser1016.

As to quaternary structure, binds F-actin through its N-terminus. Interacts with MYZAP. Binds RHOA, PPP1R12A/MBS and PPP1R12C/MBS85 through adjacent coiled coil domains.

The protein resides in the cytoplasm. The protein localises to the cytoskeleton. Its function is as follows. Targets myosin phosphatase to the actin cytoskeleton. Required for the regulation of the actin cytoskeleton by RhoA and ROCK1. Depletion leads to an increased number of stress fibers in smooth muscle cells through stabilization of actin fibers by phosphorylated myosin. Overexpression of MRIP as well as its F-actin-binding region leads to disassembly of stress fibers in neuronal cells. This chain is Myosin phosphatase Rho-interacting protein (MPRIP), found in Homo sapiens (Human).